The primary structure comprises 242 residues: MSHFEILSLEGLRNDGRRWDEMRNFQCRIGIEPSENGSAFIELGNTKVLCIVDGPSEPVIKSKARADRTFVNVEINIASFSTIDVKKRFKSDRRIQLQCLALQNTFEEIIQTELYPRSQISVYLHVLQDDGAVMASCINATTLALIDAGIPVKDFVCCSTAGIVESDMLLDLNSLEESALSWLTVAVLGNIKKVVYMQLETSMHLDYLESVMNMAIAGSEHIYNTMQSAVRQSAKPALASLS.

Belongs to the RNase PH family. As to quaternary structure, component of the RNA exosome complex. Specifically part of the catalytically inactive RNA exosome core complex (Exo-9) which may associate with the catalytic subunits rrp6 and dis3 in cytoplasmic- and nuclear-specific RNA exosome complex forms. Exo-9 is formed by a hexameric base ring of RNase PH domain-containing subunits and a cap ring consisting of csl4, rrp4 and rrp40.

The protein resides in the cytoplasm. It localises to the nucleus. The protein localises to the nucleolus. Its function is as follows. Non-catalytic component of the RNA exosome complex which has 3'-&gt;5' exoribonuclease activity and participates in a multitude of cellular RNA processing and degradation events. In the nucleus, the RNA exosome complex is involved in proper maturation of stable RNA species such as rRNA, snRNA and snoRNA, in the elimination of RNA processing by-products and non-coding 'pervasive' transcripts, such as antisense RNA species and cryptic unstable transcripts (CUTs), and of mRNAs with processing defects, thereby limiting or excluding their export to the cytoplasm. In the cytoplasm, the RNA exosome complex is involved in general mRNA turnover and in RNA surveillance pathways, preventing translation of aberrant mRNAs. The catalytic inactive RNA exosome core complex of 9 subunits (Exo-9) is proposed to play a pivotal role in the binding and presentation of RNA for ribonucleolysis, and to serve as a scaffold for the association with catalytic subunits and accessory proteins or complexes. ski6 is part of the hexameric ring of RNase PH domain-containing subunits proposed to form a central channel which threads RNA substrates for degradation. This Schizosaccharomyces pombe (strain 972 / ATCC 24843) (Fission yeast) protein is Exosome complex component ski6 (ski6).